The following is a 118-amino-acid chain: Mediator of RNA polymerase II transcription subunit 11 (118 aa).

It belongs to the Mediator complex subunit 11 family. Component of the Mediator complex.

It localises to the nucleus. Functionally, component of the Mediator complex, a coactivator involved in the regulated transcription of nearly all RNA polymerase II-dependent genes. Mediator functions as a bridge to convey information from gene-specific regulatory proteins to the basal RNA polymerase II transcription machinery. Mediator is recruited to promoters by direct interactions with regulatory proteins and serves as a scaffold for the assembly of a functional pre-initiation complex with RNA polymerase II and the general transcription factors. The polypeptide is Mediator of RNA polymerase II transcription subunit 11 (med11) (Xenopus tropicalis (Western clawed frog)).